An 843-amino-acid chain; its full sequence is Phosphatidylinositol-glycan-specific phospholipase D (843 aa).

The signal sequence occupies residues 1–23; sequence MSVGRLWSGLLLLLLFFCSRSSS. N-linked (GlcNAc...) asparagine glycosylation is found at asparagine 94, asparagine 271, asparagine 292, asparagine 308, and asparagine 322. 7 FG-GAP repeats span residues 368–429, 435–498, 500–560, 564–625, 635–695, 707–773, and 791–843; these read SPSA…GLPP, DKEA…GRLS, SPNI…RNDK, TLDE…SLGR, QREI…GATR, ALFS…TLGD, and QYVL…FSSD. Residues asparagine 483, asparagine 502, asparagine 592, asparagine 605, and asparagine 661 are each glycosylated (N-linked (GlcNAc...) asparagine).

It belongs to the GPLD1 family. Monomer. Glycosylated.

The protein resides in the secreted. The catalysed reaction is a 6-(alpha-D-glucosaminyl)-1-(1,2-diacyl-sn-glycero-3-phospho)-1D-myo-inositol + H2O = 6-(alpha-D-glucosaminyl)-1D-myo-inositol + a 1,2-diacyl-sn-glycero-3-phosphate + H(+). In terms of biological role, this protein hydrolyzes the inositol phosphate linkage in proteins anchored by phosphatidylinositol glycans (GPI-anchor) thus releasing these proteins from the membrane. The polypeptide is Phosphatidylinositol-glycan-specific phospholipase D (Gpld1) (Rattus norvegicus (Rat)).